Consider the following 623-residue polypeptide: Chaperone protein dnaK (623 aa).

Residues 598–623 (TPDAGAEGGAAPSQDDAIETDFSTEK) are disordered.

The protein belongs to the heat shock protein 70 family.

The protein localises to the plastid. The protein resides in the chloroplast. In terms of biological role, acts as a chaperone. In Emiliania huxleyi (Coccolithophore), this protein is Chaperone protein dnaK.